Reading from the N-terminus, the 593-residue chain is Actin-histidine N-methyltransferase (593 aa).

A disordered region spans residues methionine 1 to serine 21. Residues arginine 75, glutamate 104–phenylalanine 106, arginine 254, aspartate 275–histidine 279, and serine 325–phenylalanine 327 contribute to the S-adenosyl-L-methionine site. One can recognise an SET domain in the interval glutamate 94–glycine 314. The segment at glycine 549–glutamate 593 is disordered. Residues glycine 553 to lysine 562 are compositionally biased toward polar residues. Basic and acidic residues predominate over residues serine 563–glutamate 593.

It belongs to the class V-like SAM-binding methyltransferase superfamily. SETD3 actin-histidine methyltransferase family.

The protein resides in the cytoplasm. The enzyme catalyses L-histidyl-[protein] + S-adenosyl-L-methionine = N(tele)-methyl-L-histidyl-[protein] + S-adenosyl-L-homocysteine + H(+). Functionally, protein-histidine N-methyltransferase that specifically mediates 3-methylhistidine (tele-methylhistidine) methylation of actin at 'His-73'. Does not have protein-lysine N-methyltransferase activity and probably only catalyzes histidine methylation of actin. The sequence is that of Actin-histidine N-methyltransferase from Gallus gallus (Chicken).